The sequence spans 274 residues: Shikimate dehydrogenase (NADP(+)) (274 aa).

Shikimate contacts are provided by residues 14–16 (SKS) and Thr60. Residue Lys64 is the Proton acceptor of the active site. Residue Glu76 coordinates NADP(+). Shikimate contacts are provided by Asn85 and Asp101. NADP(+) is bound by residues 126 to 130 (GAGGA), 150 to 155 (NRTAEK), and Met214. Position 216 (Tyr216) interacts with shikimate. Gly238 contacts NADP(+).

This sequence belongs to the shikimate dehydrogenase family. Homodimer.

The enzyme catalyses shikimate + NADP(+) = 3-dehydroshikimate + NADPH + H(+). It functions in the pathway metabolic intermediate biosynthesis; chorismate biosynthesis; chorismate from D-erythrose 4-phosphate and phosphoenolpyruvate: step 4/7. Its function is as follows. Involved in the biosynthesis of the chorismate, which leads to the biosynthesis of aromatic amino acids. Catalyzes the reversible NADPH linked reduction of 3-dehydroshikimate (DHSA) to yield shikimate (SA). The sequence is that of Shikimate dehydrogenase (NADP(+)) from Pseudomonas paraeruginosa (strain DSM 24068 / PA7) (Pseudomonas aeruginosa (strain PA7)).